The chain runs to 158 residues: 6,7-dimethyl-8-ribityllumazine synthase (158 aa).

Residues phenylalanine 22, 57–59 (AVE), and 81–83 (AVI) each bind 5-amino-6-(D-ribitylamino)uracil. 86 to 87 (GT) serves as a coordination point for (2S)-2-hydroxy-3-oxobutyl phosphate. The active-site Proton donor is histidine 89. A 5-amino-6-(D-ribitylamino)uracil-binding site is contributed by phenylalanine 114. Arginine 128 lines the (2S)-2-hydroxy-3-oxobutyl phosphate pocket.

The protein belongs to the DMRL synthase family. In terms of assembly, forms an icosahedral capsid composed of 60 subunits, arranged as a dodecamer of pentamers.

It carries out the reaction (2S)-2-hydroxy-3-oxobutyl phosphate + 5-amino-6-(D-ribitylamino)uracil = 6,7-dimethyl-8-(1-D-ribityl)lumazine + phosphate + 2 H2O + H(+). Its pathway is cofactor biosynthesis; riboflavin biosynthesis; riboflavin from 2-hydroxy-3-oxobutyl phosphate and 5-amino-6-(D-ribitylamino)uracil: step 1/2. Functionally, catalyzes the formation of 6,7-dimethyl-8-ribityllumazine by condensation of 5-amino-6-(D-ribitylamino)uracil with 3,4-dihydroxy-2-butanone 4-phosphate. This is the penultimate step in the biosynthesis of riboflavin. The chain is 6,7-dimethyl-8-ribityllumazine synthase from Shewanella piezotolerans (strain WP3 / JCM 13877).